The primary structure comprises 493 residues: Beta-hexosaminidase Amuc_2018 (493 aa).

The signal sequence occupies residues 1–21 (MARPLPILGGILLSFSPPAEA). Arginine 122 lines the substrate pocket. Active-site charge relay system residues include aspartate 151 and histidine 214. Zn(2+)-binding residues include cysteine 227 and cysteine 247. Residue aspartate 278 participates in substrate binding. Catalysis depends on glutamate 279, which acts as the Charge relay system. Zn(2+) contacts are provided by cysteine 288 and cysteine 291. Substrate contacts are provided by residues tryptophan 345, 373 to 375 (YLD), and 421 to 423 (WAE).

This sequence belongs to the glycosyl hydrolase 20 family.

It catalyses the reaction Hydrolysis of terminal non-reducing N-acetyl-D-hexosamine residues in N-acetyl-beta-D-hexosaminides.. With respect to regulation, significantly inhibited by the addition of sodium dodecyl sulfate (SDS), but not by EDTA, urea, 2-mercaptoethanol or Triton X-100. Strongly inhibited by Cu2(+) ions, in case of which the activity is decreased by 70%. No significant inhibition with Al(3+), Fe(3+), Ca(2+), Cd(2+), Mg(2+), Mn(2+), Ni(2+) and Zn(2+) ions. Strongly inhibited by PugNAc (O-(2-acetamido-2-deoxy-D-glucopyranosylideneamino) N-phenylcarbamate) in the sub-micromolar concentration range. PugNAc at a concentration of 0.5 mM decreases the activity by 50% and the addition of 1 mM PugNAc fully inhibits the enzyme. No significant reduction in the activity by alkylation using N-ethylmaleimide or 2-iodoacetamide. Functionally, hydrolyzes terminal GlcNAc residues from terminally unbranched N-glycans and from chitobiose. Hydrolyzes beta-1,6-linked N-acetylglucosamine and beta-1,4-linked N-acetylgalactosamine from pNP-alpha-GalNAc[beta1,3Gal]beta1,6GlcNAc and pNP-beta-GlcNAc-beta1,4-GalNAc substrates, respectively, as well as beta-1,2-linked N-acetylglucosamine units from the non-reducing end of N-glycans. Hydrolyzes GlcNAc residues linked to alpha1,3- or alpha1,6-mannose branch, but has low activity on substrates with more than one GlcNAc residue on one of the mannose branches. Releases terminal GlcNAc moieties from the N-glycopeptide Gly-Glu-Asn-(GlcNAc2Man3GlcNAc2)-Arg with high efficiency. Has moderate hydrolytic activity on the chitobiose moiety of N-glycopeptide substrate Gly-Glu-Asn-(GlcNAc2)-Arg. Does not hydrolyze GlcNAc residues from N-glycan structures bearing a bisecting GlcNAc moiety (beta1,4-linked GlcNAc to the beta1,4-linked core mannose). Potentially capable of cleaving the specific glycoside linkages in the process of mucin degradation in human intestinal tract. Hydrolyzes synthetic substrate pNP-beta-GlcNAc with high activity and pNP-beta-GalNAc to a lesser extent. Does not hydrolyze pNP-beta-glucose, pNP-beta-galactose, pNP-alpha-glucose, pNP-alpha-galactose, pNP-alpha-GlcNAc or pNP-alpha-fucose. The protein is Beta-hexosaminidase Amuc_2018 of Akkermansia muciniphila (strain ATCC BAA-835 / DSM 22959 / JCM 33894 / BCRC 81048 / CCUG 64013 / CIP 107961 / Muc).